A 292-amino-acid chain; its full sequence is 2-hydroxy-3-oxopropionate reductase (292 aa).

NAD(+)-binding positions include 4–18 and serine 94; that span reads GFIGLGIMGTPMAIN. Lysine 169 is an active-site residue. Lysine 237 serves as a coordination point for NAD(+).

This sequence belongs to the HIBADH-related family.

It catalyses the reaction (R)-glycerate + NADP(+) = 2-hydroxy-3-oxopropanoate + NADPH + H(+). The enzyme catalyses (R)-glycerate + NAD(+) = 2-hydroxy-3-oxopropanoate + NADH + H(+). The protein operates within organic acid metabolism; glycolate degradation; 3-phospho-D-glycerate from glycolate: step 3/4. The chain is 2-hydroxy-3-oxopropionate reductase (glxR) from Escherichia coli (strain K12).